The primary structure comprises 345 residues: Histidinol-phosphate aminotransferase (345 aa).

An N6-(pyridoxal phosphate)lysine modification is found at Lys206.

The protein belongs to the class-II pyridoxal-phosphate-dependent aminotransferase family. Histidinol-phosphate aminotransferase subfamily. In terms of assembly, homodimer. It depends on pyridoxal 5'-phosphate as a cofactor.

It carries out the reaction L-histidinol phosphate + 2-oxoglutarate = 3-(imidazol-4-yl)-2-oxopropyl phosphate + L-glutamate. Its pathway is amino-acid biosynthesis; L-histidine biosynthesis; L-histidine from 5-phospho-alpha-D-ribose 1-diphosphate: step 7/9. The polypeptide is Histidinol-phosphate aminotransferase (Bacteroides fragilis (strain YCH46)).